The sequence spans 600 residues: L-galactono-1,4-lactone dehydrogenase, mitochondrial (600 aa).

The transit peptide at 1 to 25 (MLRSLLLRRSNARSLRPPFPPLRTL) directs the protein to the mitochondrion. Positions 16–51 (RPPFPPLRTLCTSGQTLTPAPPPPPPPPPPISSSAS) are disordered. Positions 26–91 (CTSGQTLTPA…AKHKKAQIFR (66 aa)) are cleaved as a propeptide — removed in mature form. Positions 34–46 (PAPPPPPPPPPPI) are enriched in pro residues. A helical membrane pass occupies residues 58–74 (YAGYAALALFSGAATYF). One can recognise an FAD-binding PCMH-type domain in the interval 108-279 (THEVQTRNFN…AEVTLQCVER (172 aa)).

FAD is required as a cofactor.

Its subcellular location is the mitochondrion membrane. The enzyme catalyses L-galactono-1,4-lactone + 4 Fe(III)-[cytochrome c] = L-dehydroascorbate + 4 Fe(II)-[cytochrome c] + 5 H(+). It functions in the pathway cofactor biosynthesis; L-ascorbate biosynthesis. Inhibited by sulfhydryl-modifying agents such as N-ethylmaleimide, monoiodoacetic acid and p-hydroxymercuribenzoic acid. No inhibition by riboflavin and lycorine. Involved in the biosynthesis of ascorbic acid. Uses L-galactono-1,4-lactone as substrate, but not L-gulono-1,4-lactone, D-galactono-1,4-lactone, D-gulono-1,4-lactone, D-erythronic-1,4-lactone, D-xylonic-1,4-lactone, L-mannono-1,4-lactone, D-galactonic acid, D-glucuronic acid or D-gluconic acid. FAD, NAD, NADP and O(2) cannot act as electron acceptor. This chain is L-galactono-1,4-lactone dehydrogenase, mitochondrial, found in Brassica oleracea (Wild cabbage).